We begin with the raw amino-acid sequence, 2155 residues long: Alpha-tectorin (2155 aa).

The first 24 residues, 1–24 (MNYSSLLRIWVSFIFALVRHQAQP), serve as a signal peptide directing secretion. Residues asparagine 34, asparagine 187, asparagine 215, asparagine 278, asparagine 455, asparagine 506, asparagine 528, and asparagine 560 are each glycosylated (N-linked (GlcNAc...) asparagine). Residues 98–252 (PFWADVHNGI…GRWAFKVDGK (155 aa)) form the NIDO domain. The 55-residue stretch at 260–314 (CTSRGQFLRRGEVFWDDLNCTIKCRCLDFNNEIYCQEASCSPYEVCEPKGRFFYC) folds into the VWFC domain. One can recognise a VWFD 1 domain in the interval 320–500 (STCVVFGEPH…RVYHADWKCG (181 aa)). 2 disulfide bridges follow: cysteine 322–cysteine 461 and cysteine 344–cysteine 499. The 54-residue stretch at 597–650 (CPSFSHYSVCTSSCPDTCSDLTASQNCATPCTEGCECNEGFVLSTSQCVPLHKC) folds into the TIL 1 domain. Asparagine 670, asparagine 687, asparagine 813, asparagine 843, asparagine 855, asparagine 898, asparagine 920, asparagine 931, and asparagine 949 each carry an N-linked (GlcNAc...) asparagine glycan. Positions 711 to 886 (TVCLLSQNQV…SWTTFEEICN (176 aa)) constitute a VWFD 2 domain. Cysteine 713 and cysteine 849 are joined by a disulfide. A TIL 2 domain is found at 984 to 1036 (CPENSHFEECMTCTETCETLALGPICVDSCSEGCQCDEGYALQGSQCVPRSEC). N-linked (GlcNAc...) asparagine glycosylation is found at asparagine 1048, asparagine 1064, asparagine 1235, and asparagine 1364. Positions 1098 to 1278 (ASCIVSGYGH…SWVKRDTFCQ (181 aa)) constitute a VWFD 3 domain. 2 disulfide bridges follow: cysteine 1100–cysteine 1241 and cysteine 1122–cysteine 1277. A TIL 3 domain is found at 1372–1425 (CPPNSHYESCVSVCQPRCAAIRLKSDCNHYCVEGCQCDAGYVLNGKSCILPHNC). The VWFD 4 domain occupies 1485–1666 (SYCLAAGGGV…QKRPLAPSCN (182 aa)). Cystine bridges form between cysteine 1487–cysteine 1622, cysteine 1509–cysteine 1665, cysteine 1717–cysteine 1775, cysteine 1741–cysteine 1784, cysteine 1786–cysteine 1818, cysteine 1806–cysteine 1898, and cysteine 1837–cysteine 1857. 10 N-linked (GlcNAc...) asparagine glycosylation sites follow: asparagine 1538, asparagine 1565, asparagine 1756, asparagine 1772, asparagine 1794, asparagine 1851, asparagine 1864, asparagine 1880, asparagine 1920, and asparagine 1939. One can recognise a ZP domain in the interval 1805 to 2059 (TCKAAQMEVS…YSCKINCPQN (255 aa)). 3 disulfides stabilise this stretch: cysteine 1980-cysteine 2040, cysteine 2001-cysteine 2056, and cysteine 2045-cysteine 2052. Asparagine 2091 carries GPI-anchor amidated asparagine lipidation. The propeptide at 2092–2155 (GGCEQICTSR…HLIYKSGATS (64 aa)) is removed in mature form.

May form homomeric filament after self-association or heteromeric filament after association with beta-tectorin. Interacts with CEACAM16. In terms of processing, 3 products of tectorin seem to exist: HMM, MMM and LMM. They may be generated by active processing or the result of proteolysis occurring between intrachain disulfide bonds. The presence of a hydrophobic C-terminus preceded by a potential cleavage site strongly suggests that tectorins are synthesized as glycosylphosphatidylinositol-linked, membrane-bound precursors. Tectorins are targeted to the apical surface of the inner ear epithelia by the lipid and proteolytically released into the extracellular compartment. Cochlea-specific.

The protein localises to the cell membrane. It localises to the secreted. The protein resides in the extracellular space. Its subcellular location is the extracellular matrix. One of the major non-collagenous components of the tectorial membrane. The tectorial membrane is an extracellular matrix of the inner ear that covers the neuroepithelium of the cochlea and contacts the stereocilia bundles of specialized sensory hair cells. Sound induces movement of these hair cells relative to the tectorial membrane, deflects the stereocilia and leads to fluctuations in hair-cell membrane potential, transducing sound into electrical signals. The protein is Alpha-tectorin (Tecta) of Mus musculus (Mouse).